Here is a 646-residue protein sequence, read N- to C-terminus: ATP-dependent zinc metalloprotease FtsH (646 aa).

Topologically, residues Met-1–Ser-4 are cytoplasmic. Residues Leu-5–Thr-25 traverse the membrane as a helical segment. The Periplasmic portion of the chain corresponds to Leu-26–Trp-120. Residues Ala-121–Ile-141 form a helical membrane-spanning segment. The Cytoplasmic portion of the chain corresponds to Lys-142–Gly-646. Gly-216 to Thr-223 contacts ATP. His-437 provides a ligand contact to Zn(2+). Glu-438 is a catalytic residue. The Zn(2+) site is built by His-441 and Asp-513.

This sequence in the central section; belongs to the AAA ATPase family. In the C-terminal section; belongs to the peptidase M41 family. In terms of assembly, homohexamer. The cofactor is Zn(2+).

The protein localises to the cell inner membrane. In terms of biological role, acts as a processive, ATP-dependent zinc metallopeptidase for both cytoplasmic and membrane proteins. Plays a role in the quality control of integral membrane proteins. This chain is ATP-dependent zinc metalloprotease FtsH, found in Syntrophotalea carbinolica (strain DSM 2380 / NBRC 103641 / GraBd1) (Pelobacter carbinolicus).